The chain runs to 634 residues: Putative peptidoglycan O-acetyltransferase YrhL (634 aa).

11 helical membrane-spanning segments follow: residues 10–30 (YIPG…TYHL), 38–58 (GFIG…SILL), 79–99 (RLLP…VLFD), 110–130 (AISS…LSYF), 145–165 (LAIE…GMYI), 172–192 (LAAV…VLYE), 244–264 (FLAF…EPFL), 270–290 (LFIS…SSFL), 307–327 (YGIY…QEIG), 329–349 (PVFW…ELSY), and 385–405 (MSIG…SGLA). Residues 413 to 481 (KWTYSSQETN…SQQLKKPADT (69 aa)) are disordered. Over residues 414–429 (WTYSSQETNADTSQAS) the composition is skewed to polar residues. Composition is skewed to basic and acidic residues over residues 430 to 447 (GDKK…EQKT) and 455 to 470 (KENK…KKDT).

This sequence belongs to the acyltransferase 3 family.

The protein resides in the cell membrane. The chain is Putative peptidoglycan O-acetyltransferase YrhL (yrhL) from Bacillus subtilis (strain 168).